A 141-amino-acid chain; its full sequence is Putative pre-16S rRNA nuclease (141 aa).

Belongs to the YqgF nuclease family.

It localises to the cytoplasm. Functionally, could be a nuclease involved in processing of the 5'-end of pre-16S rRNA. In Syntrophomonas wolfei subsp. wolfei (strain DSM 2245B / Goettingen), this protein is Putative pre-16S rRNA nuclease.